The chain runs to 354 residues: tRNA N6-adenosine threonylcarbamoyltransferase (354 aa).

Positions 111 and 115 each coordinate Fe cation. Substrate contacts are provided by residues 134–138, Asp-167, Gly-180, and Asn-279; that span reads LVSGG. Asp-319 is a Fe cation binding site.

It belongs to the KAE1 / TsaD family. It depends on Fe(2+) as a cofactor.

The protein resides in the cytoplasm. It carries out the reaction L-threonylcarbamoyladenylate + adenosine(37) in tRNA = N(6)-L-threonylcarbamoyladenosine(37) in tRNA + AMP + H(+). Required for the formation of a threonylcarbamoyl group on adenosine at position 37 (t(6)A37) in tRNAs that read codons beginning with adenine. Is involved in the transfer of the threonylcarbamoyl moiety of threonylcarbamoyl-AMP (TC-AMP) to the N6 group of A37, together with TsaE and TsaB. TsaD likely plays a direct catalytic role in this reaction. The sequence is that of tRNA N6-adenosine threonylcarbamoyltransferase from Neisseria meningitidis.